Here is a 315-residue protein sequence, read N- to C-terminus: Pantothenate kinase (315 aa).

Gly94 to Ser101 provides a ligand contact to ATP.

It belongs to the prokaryotic pantothenate kinase family.

Its subcellular location is the cytoplasm. The enzyme catalyses (R)-pantothenate + ATP = (R)-4'-phosphopantothenate + ADP + H(+). Its pathway is cofactor biosynthesis; coenzyme A biosynthesis; CoA from (R)-pantothenate: step 1/5. This chain is Pantothenate kinase, found in Shewanella amazonensis (strain ATCC BAA-1098 / SB2B).